A 396-amino-acid chain; its full sequence is Elongation factor Tu (396 aa).

Residues 10 to 206 form the tr-type G domain; that stretch reads KPHVNVGTIG…ALDTYIPEPE (197 aa). The interval 19–26 is G1; the sequence is GHVDHGKT. Position 19 to 26 (19 to 26) interacts with GTP; the sequence is GHVDHGKT. Thr-26 lines the Mg(2+) pocket. Residues 60–64 form a G2 region; that stretch reads GITIN. Residues 81–84 form a G3 region; sequence DCPG. GTP contacts are provided by residues 81-85 and 136-139; these read DCPGH and NKCD. The G4 stretch occupies residues 136-139; that stretch reads NKCD. A G5 region spans residues 174–176; the sequence is SAL.

This sequence belongs to the TRAFAC class translation factor GTPase superfamily. Classic translation factor GTPase family. EF-Tu/EF-1A subfamily. As to quaternary structure, monomer.

It is found in the cytoplasm. It carries out the reaction GTP + H2O = GDP + phosphate + H(+). Its function is as follows. GTP hydrolase that promotes the GTP-dependent binding of aminoacyl-tRNA to the A-site of ribosomes during protein biosynthesis. This chain is Elongation factor Tu, found in Acinetobacter baylyi (strain ATCC 33305 / BD413 / ADP1).